Consider the following 847-residue polypeptide: A-kinase anchor protein 4 (847 aa).

Residues 1–187 (MIAYCGTTKM…MAASKNTNNN (187 aa)) constitute a propeptide that is removed on maturation. Residues Ser95, Ser129, Ser189, and Ser203 each carry the phosphoserine modification. The segment covering 182–204 (KNTNNNQSPSNPATKSPSNQRSV) has biased composition (polar residues). Residues 182 to 209 (KNTNNNQSPSNPATKSPSNQRSVATPDG) are disordered. At Thr206 the chain carries Phosphothreonine. A phosphoserine mark is found at Ser212, Ser225, and Ser270. An interaction with Prkar1a and Prkar2a region spans residues 218–231 (YYVNRLSSLVIQMA). Position 300 is a phosphotyrosine (Tyr300). Ser301, Ser304, Ser340, Ser430, Ser441, Ser443, Ser462, Ser491, Ser496, and Ser503 each carry phosphoserine. Residues 334 to 343 (YANQVASDMM) are PKA-RI subunit binding domain. Thr505 is subject to Phosphothreonine. The interval 511-536 (KQGTQGRVPNKVCPSKDEKREKISPS) is disordered. Over residues 524 to 533 (PSKDEKREKI) the composition is skewed to basic and acidic residues. Phosphoserine is present on residues Ser536 and Ser581. Residues 583-613 (QYEKSGGGQSSKSLSMKHFESRGAPGPSTCA) are disordered. Phosphoserine occurs at positions 626, 631, 648, 650, 674, 677, 700, and 729. The segment at 655-677 (CCDSRSKQAAPVAKRPEDQSQDS) is disordered.

The protein belongs to the AKAP110 family. As to quaternary structure, interacts with PRKAR1A and PRKAR2A. Interacts with ENO4. Interacts with QRICH2. Post-translationally, phosphorylated by STK33 during sperm flagella assembly. Expressed in flagella of epididymal sperm.

It localises to the cell projection. Its subcellular location is the cilium. It is found in the flagellum. Functionally, major structural component of sperm fibrous sheath. May play a role in sperm motility. The protein is A-kinase anchor protein 4 of Rattus norvegicus (Rat).